The primary structure comprises 577 residues: DNA-directed RNA polymerase subunit alpha (577 aa).

Positions 1 to 461 are alpha N-terminal domain (alpha-NTD); it reads MIKIIIKETF…QLFLPLQQIR (461 aa). The segment at 510 to 577 is alpha C-terminal domain (alpha-CTD); that stretch reads FDHRLLELDI…ALQLMKLTLK (68 aa).

Belongs to the RNA polymerase alpha chain family. In plastids the minimal PEP RNA polymerase catalytic core is composed of four subunits: alpha, beta, beta', and beta''. When a (nuclear-encoded) sigma factor is associated with the core the holoenzyme is formed, which can initiate transcription.

Its subcellular location is the plastid. It is found in the chloroplast. The catalysed reaction is RNA(n) + a ribonucleoside 5'-triphosphate = RNA(n+1) + diphosphate. DNA-dependent RNA polymerase catalyzes the transcription of DNA into RNA using the four ribonucleoside triphosphates as substrates. This chain is DNA-directed RNA polymerase subunit alpha, found in Tupiella akineta (Green alga).